The chain runs to 242 residues: Small ribosomal subunit protein uS2 (242 aa).

The protein belongs to the universal ribosomal protein uS2 family.

The chain is Small ribosomal subunit protein uS2 from Idiomarina loihiensis (strain ATCC BAA-735 / DSM 15497 / L2-TR).